Here is a 459-residue protein sequence, read N- to C-terminus: Septin-4 (459 aa).

Phosphoserine is present on residues S10, S49, S98, and S99. Disordered regions lie at residues 18-52 and 70-98; these read FVKD…SPDL and SQQY…PYDS. Positions 122-395 constitute a Septin-type G domain; that stretch reads KGFDFTLMVA…ENYRAQCIQS (274 aa). Residues 132 to 139 form a G1 motif region; sequence GESGLGKS. Residues 132-139 and T166 contribute to the GTP site; that span reads GESGLGKS. The interval 189 to 192 is G3 motif; it reads DTPG. The tract at residues 270–273 is G4 motif; the sequence is AKAD. Residue 271 to 279 coordinates GTP; that stretch reads KADTLTPSE. S306 carries the post-translational modification Phosphoserine. Residues G329 and R344 each contribute to the GTP site. The segment at 410-430 is disordered; that stretch reads TRESGTDFPIPAVPPGTDPET. S413 is modified (phosphoserine). T415 carries the phosphothreonine modification. Positions 434–459 form a coiled coil; it reads IREKDEELRRMQEMLHKIQRQMKETH.

Belongs to the TRAFAC class TrmE-Era-EngA-EngB-Septin-like GTPase superfamily. Septin GTPase family. As to quaternary structure, septins polymerize into heterooligomeric protein complexes that form filaments, and can associate with cellular membranes, actin filaments and microtubules. GTPase activity is required for filament formation. Interacts with SEPTIN8. Component of a septin core octameric complex consisting of SEPTIN12, SEPTIN7, SEPTIN6 and SEPTIN2 or SEPTIN4 in the order 12-7-6-2-2-6-7-12 or 12-7-6-4-4-6-7-12. Interacts with SEPTIN14 (via C-terminus). Interacts with DYRK1A. Interacts with SLC6A3/DAT and SNCA/alpha-synuclein. Interacts with STX1A; in the striatum. Interacts with XIAP (via BIR3 domain) following the induction of apoptosis. Interacts with AREL1 (via HECT domain); in the cytoplasm following induction of apoptosis. In terms of processing, phosphorylated by DYRK1A.

It localises to the cytoplasm. The protein resides in the cell projection. The protein localises to the cilium. It is found in the flagellum. Its subcellular location is the cytoplasmic vesicle. It localises to the secretory vesicle. The protein resides in the axon. The protein localises to the dendrite. It is found in the perikaryon. Its function is as follows. Filament-forming cytoskeletal GTPase. Pro-apoptotic protein involved in LGR5-positive intestinal stem cell and Paneth cell expansion in the intestines, via its interaction with XIAP. May also play a role in the regulation of cell fate in the intestine. Positive regulator of apoptosis involved in hematopoietic stem cell homeostasis; via its interaction with XIAP. Negative regulator of repair and hair follicle regeneration in response to injury, due to inhibition of hair follicle stem cell proliferation, potentially via its interaction with XIAP. Plays an important role in male fertility and sperm motility. During spermiogenesis, essential for the establishment of the annulus (a fibrous ring structure connecting the midpiece and the principal piece of the sperm flagellum) which is a requisite for the structural and mechanical integrity of the sperm. Involved in the migration of cortical neurons and the formation of neuron leading processes during embryonic development. Required for dopaminergic metabolism in presynaptic autoreceptors; potentially via activity as a presynaptic scaffold protein. The sequence is that of Septin-4 from Rattus norvegicus (Rat).